The primary structure comprises 614 residues: UvrABC system protein C (614 aa).

Residues 20–98 form the GIY-YIG domain; it reads TAPGVYRMYA…IKSLSPRYNV (79 aa). The region spanning 207-242 is the UVR domain; sequence DELTRELGEQMQAASEALEFEQAARLRDLISSLRSM.

This sequence belongs to the UvrC family. Interacts with UvrB in an incision complex.

It localises to the cytoplasm. In terms of biological role, the UvrABC repair system catalyzes the recognition and processing of DNA lesions. UvrC both incises the 5' and 3' sides of the lesion. The N-terminal half is responsible for the 3' incision and the C-terminal half is responsible for the 5' incision. The protein is UvrABC system protein C of Stenotrophomonas maltophilia (strain R551-3).